We begin with the raw amino-acid sequence, 448 residues long: uncharacterized protein (448 aa).

Component of the acid-insoluble and acid-soluble organic matrix of the aragonitic skeleton (at protein level).

Its subcellular location is the secreted. This is an uncharacterized protein from Acropora millepora (Staghorn coral).